The following is a 446-amino-acid chain: Probable ribosomal RNA small subunit methyltransferase B (446 aa).

S-adenosyl-L-methionine-binding positions include 260–266 (CAAPGGK), aspartate 284, aspartate 311, and aspartate 330. Cysteine 383 serves as the catalytic Nucleophile.

It belongs to the class I-like SAM-binding methyltransferase superfamily. RsmB/NOP family.

The protein resides in the cytoplasm. It catalyses the reaction cytidine(967) in 16S rRNA + S-adenosyl-L-methionine = 5-methylcytidine(967) in 16S rRNA + S-adenosyl-L-homocysteine + H(+). Its function is as follows. Specifically methylates the cytosine at position 967 (m5C967) of 16S rRNA. The sequence is that of Probable ribosomal RNA small subunit methyltransferase B from Synechocystis sp. (strain ATCC 27184 / PCC 6803 / Kazusa).